The following is a 286-amino-acid chain: Pantothenate synthetase (286 aa).

Residue 30–37 coordinates ATP; that stretch reads MGFLHEGH. The active-site Proton donor is H37. Q61 provides a ligand contact to (R)-pantoate. Q61 serves as a coordination point for beta-alanine. 147-150 serves as a coordination point for ATP; it reads GLKD. Q153 provides a ligand contact to (R)-pantoate. ATP-binding positions include V176 and 184-187; that span reads KSSR.

Belongs to the pantothenate synthetase family. As to quaternary structure, homodimer.

The protein resides in the cytoplasm. The enzyme catalyses (R)-pantoate + beta-alanine + ATP = (R)-pantothenate + AMP + diphosphate + H(+). It functions in the pathway cofactor biosynthesis; (R)-pantothenate biosynthesis; (R)-pantothenate from (R)-pantoate and beta-alanine: step 1/1. Functionally, catalyzes the condensation of pantoate with beta-alanine in an ATP-dependent reaction via a pantoyl-adenylate intermediate. The polypeptide is Pantothenate synthetase (Bacillus subtilis (strain 168)).